Consider the following 672-residue polypeptide: Nuclear RNA export factor 1 (672 aa).

Disordered stretches follow at residues 1–52 (MPKR…SFKP) and 73–101 (DEDD…IPRG). A compositionally biased stretch (basic residues) spans 40–49 (RKDRNKRRVS). Residues 113-193 (WYQVTLQNAQ…PRVRSGIPLV (81 aa)) enclose the RRM domain. 4 LRR repeats span residues 255–280 (DLEA…KRLP), 281–304 (NLKI…LRNL), 305–332 (SILE…EVRR), and 333–360 (KFPK…GRLL). Residues 375–529 (VVRQFLDQYF…FCIRNETIFI (155 aa)) enclose the NTF2 domain. The disordered stretch occupies residues 541 to 564 (KRSQHQPAPGAMPSTSSAVTSPQA). The segment covering 553 to 563 (PSTSSAVTSPQ) has biased composition (polar residues). Residue serine 561 is modified to Phosphoserine. One can recognise a TAP-C domain in the interval 618 to 672 (STKMQMIEAMSAQSQMNVIWSRKCLEETNWDFNHAAFVFEKLFKENKIPPEAFMK).

Belongs to the NXF family. In terms of assembly, interacts with Nxt1. Interacts with ZC3H3. Forms a complex with Nup358/RanBP2, RanGAP and Nxt1. Interacts with Nup54 and Nup58. Interacts with Orc3 and Hpr1. As to expression, expressed ubiquitously.

It localises to the nucleus. The protein resides in the nucleoplasm. It is found in the cytoplasm. The protein localises to the nucleus envelope. Functionally, mediates the export of the majority of mRNAs from the nucleus to the cytoplasm. In ovarian follicle cells, plays a role in transposable element silencing regulation by enabling the nuclear export of flamenco (flam) transcripts and subsequent piRNA biogenesis. This chain is Nuclear RNA export factor 1, found in Drosophila melanogaster (Fruit fly).